The following is a 350-amino-acid chain: MILSSLLPLSLVTLTSAALTYRGADISSLLIEEDSGVAYKNLNGETQAFELILANNGVNSIRQRIWVNPSDGSYNLEYNLELAKRVQDAGMSVYLDLHLSDTWADPGDQATPSGWSTTDIDTLAWQVYNYTLDVCNTFAENNVAVEIVSIGNEIRNGLLHPLGSTDHYDNIARLLHSGAWGVKDSSLSTTPKILFHLDNGWDWDAQKYFYDTVLATGTLLSTDFDLIGVSYYPFYNADATLSSLKTSLTNLKSNYGKNVLVVETDWPVQCSSPEYAFPSDLSSIPFSADGQETFLGRLADTLEDVGGVGIYYWEPGWVDNAGLGSSCEDNLMVDWRDRTVRESISVFGDL.

Positions M1–A17 are cleaved as a signal peptide. The N-linked (GlcNAc...) asparagine glycan is linked to N129. Residue E153 is the Proton donor of the active site. Catalysis depends on E263, which acts as the Nucleophile.

This sequence belongs to the glycosyl hydrolase 53 family.

It localises to the secreted. It catalyses the reaction The enzyme specifically hydrolyzes (1-&gt;4)-beta-D-galactosidic linkages in type I arabinogalactans.. Endogalactanase involved in the degradation of plant cell wall polysaccharides, and more particularly of hairy regions of pectin. The sequence is that of Arabinogalactan endo-beta-1,4-galactanase A (galA) from Emericella nidulans (strain FGSC A4 / ATCC 38163 / CBS 112.46 / NRRL 194 / M139) (Aspergillus nidulans).